The chain runs to 483 residues: Aspartyl/glutamyl-tRNA(Asn/Gln) amidotransferase subunit B (483 aa).

This sequence belongs to the GatB/GatE family. GatB subfamily. As to quaternary structure, heterotrimer of A, B and C subunits.

The catalysed reaction is L-glutamyl-tRNA(Gln) + L-glutamine + ATP + H2O = L-glutaminyl-tRNA(Gln) + L-glutamate + ADP + phosphate + H(+). It catalyses the reaction L-aspartyl-tRNA(Asn) + L-glutamine + ATP + H2O = L-asparaginyl-tRNA(Asn) + L-glutamate + ADP + phosphate + 2 H(+). Functionally, allows the formation of correctly charged Asn-tRNA(Asn) or Gln-tRNA(Gln) through the transamidation of misacylated Asp-tRNA(Asn) or Glu-tRNA(Gln) in organisms which lack either or both of asparaginyl-tRNA or glutaminyl-tRNA synthetases. The reaction takes place in the presence of glutamine and ATP through an activated phospho-Asp-tRNA(Asn) or phospho-Glu-tRNA(Gln). This chain is Aspartyl/glutamyl-tRNA(Asn/Gln) amidotransferase subunit B, found in Anaplasma phagocytophilum (strain HZ).